Reading from the N-terminus, the 375-residue chain is Probable peptidoglycan glycosyltransferase FtsW (375 aa).

Residues 1–16 are Cytoplasmic-facing; that stretch reads MNLNFKLNLKEIERYD. The chain crosses the membrane as a helical span at residues 17–37; sequence LVILLMAVALTCFGVVMVYSA. Residues 38–49 lie on the Periplasmic side of the membrane; that stretch reads SSVMATKKFHDG. Residues 50-70 form a helical membrane-spanning segment; that stretch reads FYFLKRQGIYAILGCAAMIVA. Residues 71 to 81 lie on the Cytoplasmic side of the membrane; the sequence is MRIDYRQWREY. The chain crosses the membrane as a helical span at residues 82-102; sequence AVPILLGCLLLLLLVFIPGIG. Residues 103–145 are Periplasmic-facing; it reads GAAKGASRWIRFPGFNLQPSELAKIALIMYMAYSLDKKQEKVK. Residues 146–166 traverse the membrane as a helical segment; sequence FFSTGFAPYMVLLAILLAILL. Over 167-169 the chain is Cytoplasmic; it reads KQH. The chain crosses the membrane as a helical span at residues 170-190; the sequence is DLGSALTMGGVAILMLFAAGT. Topologically, residues 191–193 are periplasmic; it reads RPR. Residues 194 to 214 form a helical membrane-spanning segment; that stretch reads YILGMVVLTLPFLYFLVMNVD. Residues 215–233 are Cytoplasmic-facing; sequence YRRRRILAYLNPWEDPTNT. A helical membrane pass occupies residues 234–254; the sequence is GFQIIQSWLAFGNGGIIGQGL. Topologically, residues 255 to 279 are periplasmic; sequence GEGKQKMFFLPEAHTDFILSVVGEE. A helical membrane pass occupies residues 280–300; the sequence is LGLIGVIVIAAMFLMLVLRGV. Over 301–312 the chain is Cytoplasmic; the sequence is RVALMAQDPFGR. Residues 313 to 333 traverse the membrane as a helical segment; that stretch reads FLAFGIVTLLGIQAFVNMGVV. At 334–343 the chain is on the periplasmic side; it reads TGLLPTKGLA. The helical transmembrane segment at 344-364 threads the bilayer; sequence LPFISYGGSSLIVTLFAVGIL. At 365-375 the chain is on the cytoplasmic side; sequence LNVSTRMKGTP.

It belongs to the SEDS family. FtsW subfamily.

It localises to the cell inner membrane. It catalyses the reaction [GlcNAc-(1-&gt;4)-Mur2Ac(oyl-L-Ala-gamma-D-Glu-L-Lys-D-Ala-D-Ala)](n)-di-trans,octa-cis-undecaprenyl diphosphate + beta-D-GlcNAc-(1-&gt;4)-Mur2Ac(oyl-L-Ala-gamma-D-Glu-L-Lys-D-Ala-D-Ala)-di-trans,octa-cis-undecaprenyl diphosphate = [GlcNAc-(1-&gt;4)-Mur2Ac(oyl-L-Ala-gamma-D-Glu-L-Lys-D-Ala-D-Ala)](n+1)-di-trans,octa-cis-undecaprenyl diphosphate + di-trans,octa-cis-undecaprenyl diphosphate + H(+). It functions in the pathway cell wall biogenesis; peptidoglycan biosynthesis. In terms of biological role, peptidoglycan polymerase that is essential for cell division. The sequence is that of Probable peptidoglycan glycosyltransferase FtsW from Geobacter metallireducens (strain ATCC 53774 / DSM 7210 / GS-15).